The chain runs to 105 residues: UPF0145 protein lpp0255 (105 aa).

The protein belongs to the UPF0145 family.

This Legionella pneumophila (strain Paris) protein is UPF0145 protein lpp0255.